The following is a 405-amino-acid chain: Imidazolonepropionase (405 aa).

The Fe(3+) site is built by H73 and H75. Residues H73 and H75 each coordinate Zn(2+). 3 residues coordinate 4-imidazolone-5-propanoate: R82, Y145, and H178. Y145 contacts N-formimidoyl-L-glutamate. Residue H243 participates in Fe(3+) binding. H243 serves as a coordination point for Zn(2+). Q246 provides a ligand contact to 4-imidazolone-5-propanoate. D318 serves as a coordination point for Fe(3+). D318 contributes to the Zn(2+) binding site. The N-formimidoyl-L-glutamate site is built by N320 and G322. T323 contributes to the 4-imidazolone-5-propanoate binding site.

The protein belongs to the metallo-dependent hydrolases superfamily. HutI family. Zn(2+) is required as a cofactor. Requires Fe(3+) as cofactor.

It localises to the cytoplasm. The enzyme catalyses 4-imidazolone-5-propanoate + H2O = N-formimidoyl-L-glutamate. It participates in amino-acid degradation; L-histidine degradation into L-glutamate; N-formimidoyl-L-glutamate from L-histidine: step 3/3. Its function is as follows. Catalyzes the hydrolytic cleavage of the carbon-nitrogen bond in imidazolone-5-propanoate to yield N-formimidoyl-L-glutamate. It is the third step in the universal histidine degradation pathway. This is Imidazolonepropionase from Brucella abortus (strain S19).